The primary structure comprises 321 residues: CRISPR-associated endonuclease Cas1 2 (321 aa).

Glutamate 150, histidine 213, and glutamate 228 together coordinate Mn(2+).

The protein belongs to the CRISPR-associated endonuclease Cas1 family. Homodimer, forms a heterotetramer with a Cas2 homodimer. It depends on Mg(2+) as a cofactor. The cofactor is Mn(2+).

Functionally, CRISPR (clustered regularly interspaced short palindromic repeat), is an adaptive immune system that provides protection against mobile genetic elements (viruses, transposable elements and conjugative plasmids). CRISPR clusters contain spacers, sequences complementary to antecedent mobile elements, and target invading nucleic acids. CRISPR clusters are transcribed and processed into CRISPR RNA (crRNA). Acts as a dsDNA endonuclease. Involved in the integration of spacer DNA into the CRISPR cassette. The chain is CRISPR-associated endonuclease Cas1 2 from Moorella thermoacetica (strain ATCC 39073 / JCM 9320).